We begin with the raw amino-acid sequence, 164 residues long: ATP synthase subunit b 2 (164 aa).

Residues 4–24 (TFWAFVGLVLFLALLVYFEVP) form a helical membrane-spanning segment.

This sequence belongs to the ATPase B chain family. F-type ATPases have 2 components, F(1) - the catalytic core - and F(0) - the membrane proton channel. F(1) has five subunits: alpha(3), beta(3), gamma(1), delta(1), epsilon(1). F(0) has three main subunits: a(1), b(2) and c(10-14). The alpha and beta chains form an alternating ring which encloses part of the gamma chain. F(1) is attached to F(0) by a central stalk formed by the gamma and epsilon chains, while a peripheral stalk is formed by the delta and b chains.

The protein localises to the cell inner membrane. In terms of biological role, f(1)F(0) ATP synthase produces ATP from ADP in the presence of a proton or sodium gradient. F-type ATPases consist of two structural domains, F(1) containing the extramembraneous catalytic core and F(0) containing the membrane proton channel, linked together by a central stalk and a peripheral stalk. During catalysis, ATP synthesis in the catalytic domain of F(1) is coupled via a rotary mechanism of the central stalk subunits to proton translocation. Functionally, component of the F(0) channel, it forms part of the peripheral stalk, linking F(1) to F(0). The chain is ATP synthase subunit b 2 from Bartonella henselae (strain ATCC 49882 / DSM 28221 / CCUG 30454 / Houston 1) (Rochalimaea henselae).